The chain runs to 453 residues: Tyrosine-protein phosphatase non-receptor type 18 (453 aa).

The Tyrosine-protein phosphatase domain occupies 26–291 (LAREFSDIKA…RFLYHTVAQL (266 aa)). Substrate-binding positions include aspartate 197, 229–235 (CSAGCGR), and glutamine 276. Cysteine 229 serves as the catalytic Phosphocysteine intermediate. A phosphotyrosine mark is found at tyrosine 381 and tyrosine 419. The tract at residues 384–453 (VAPRAQRPVA…RDPPAEWTRV (70 aa)) is disordered. Over residues 442 to 453 (GPRDPPAEWTRV) the composition is skewed to basic and acidic residues.

This sequence belongs to the protein-tyrosine phosphatase family. Non-receptor class 4 subfamily. In terms of assembly, interacts with PSTPIP1. As to expression, highest expression in bone marrow. Also expressed in kidney, lung, ovary, spleen, thymus and lymph node.

It localises to the nucleus. Its subcellular location is the cytoplasm. The catalysed reaction is O-phospho-L-tyrosyl-[protein] + H2O = L-tyrosyl-[protein] + phosphate. May be involved in growth and differentiation of hematopoietic cells. This chain is Tyrosine-protein phosphatase non-receptor type 18 (Ptpn18), found in Mus musculus (Mouse).